Consider the following 94-residue polypeptide: UPF0235 protein TON_0641 (94 aa).

Belongs to the UPF0235 family.

This chain is UPF0235 protein TON_0641, found in Thermococcus onnurineus (strain NA1).